The primary structure comprises 119 residues: Large ribosomal subunit protein uL22 (119 aa).

The protein belongs to the universal ribosomal protein uL22 family. Part of the 50S ribosomal subunit.

In terms of biological role, this protein binds specifically to 23S rRNA; its binding is stimulated by other ribosomal proteins, e.g. L4, L17, and L20. It is important during the early stages of 50S assembly. It makes multiple contacts with different domains of the 23S rRNA in the assembled 50S subunit and ribosome. Functionally, the globular domain of the protein is located near the polypeptide exit tunnel on the outside of the subunit, while an extended beta-hairpin is found that lines the wall of the exit tunnel in the center of the 70S ribosome. The polypeptide is Large ribosomal subunit protein uL22 (Rickettsia rickettsii (strain Iowa)).